Reading from the N-terminus, the 310-residue chain is tRNA dimethylallyltransferase (310 aa).

Residue 14–21 participates in ATP binding; the sequence is GPTASGKT. 16–21 contacts substrate; the sequence is TASGKT. Interaction with substrate tRNA regions lie at residues 39–42, 163–167, and 244–249; these read DSAL, QRLSR, and RCVGYR.

This sequence belongs to the IPP transferase family. Monomer. Mg(2+) serves as cofactor.

The catalysed reaction is adenosine(37) in tRNA + dimethylallyl diphosphate = N(6)-dimethylallyladenosine(37) in tRNA + diphosphate. In terms of biological role, catalyzes the transfer of a dimethylallyl group onto the adenine at position 37 in tRNAs that read codons beginning with uridine, leading to the formation of N6-(dimethylallyl)adenosine (i(6)A). The protein is tRNA dimethylallyltransferase of Tolumonas auensis (strain DSM 9187 / NBRC 110442 / TA 4).